A 398-amino-acid polypeptide reads, in one-letter code: O-methyltransferase mpaG (398 aa).

Ser144 is a (4E,8E)-10-(4,6-dihydroxy-7-methyl-3-oxo-1,3-dihydro-2-benzofuran-5-yl)-4,8-dimethyldeca-4,8-dienoate binding site. A 4-farnesyl-3,5-dihydroxy-6-methylphthalide-binding site is contributed by Ser144. Ser144 is a binding site for 6-O-desmethylmycophenolate. Residue Asn197 coordinates S-adenosyl-L-homocysteine. Residue Tyr199 participates in (4E,8E)-10-(4,6-dihydroxy-7-methyl-3-oxo-1,3-dihydro-2-benzofuran-5-yl)-4,8-dimethyldeca-4,8-dienoate binding. 4-farnesyl-3,5-dihydroxy-6-methylphthalide is bound at residue Tyr199. Residue Tyr199 coordinates 6-O-desmethylmycophenolate. 7 residues coordinate S-adenosyl-L-homocysteine: Tyr203, Asp237, Gly239, His244, Asp245, Asp264, and Arg265. Asp264 provides a ligand contact to S-adenosyl-L-methionine. (4E,8E)-10-(4,6-dihydroxy-7-methyl-3-oxo-1,3-dihydro-2-benzofuran-5-yl)-4,8-dimethyldeca-4,8-dienoate contacts are provided by Arg265 and Gln267. 6-O-desmethylmycophenolate is bound at residue Arg265. Asp286, Ile287, and His302 together coordinate S-adenosyl-L-homocysteine. Ser303 contacts (4E,8E)-10-(4,6-dihydroxy-7-methyl-3-oxo-1,3-dihydro-2-benzofuran-5-yl)-4,8-dimethyldeca-4,8-dienoate. Ser303 serves as a coordination point for 4-farnesyl-3,5-dihydroxy-6-methylphthalide. 6-O-desmethylmycophenolate is bound at residue Ser303. His306 serves as the catalytic Proton acceptor. Catalysis depends on residues Glu335 and Glu362.

Belongs to the class I-like SAM-binding methyltransferase superfamily. Cation-independent O-methyltransferase family. COMT subfamily. In terms of assembly, homodimer.

It localises to the cytoplasm. The protein localises to the cytosol. It carries out the reaction (4E,8E)-10-(4,6-dihydroxy-7-methyl-3-oxo-1,3-dihydro-2-benzofuran-5-yl)-4,8-dimethyldeca-4,8-dienoate + S-adenosyl-L-methionine = (4E,8E)-10-(4-hydroxy-6-methoxy-7-methyl-3-oxo-1,3-dihydro-2-benzofuran-5-yl)-4,8-dimethyldeca-4,8-dienoate + S-adenosyl-L-homocysteine + H(+). The catalysed reaction is 4-farnesyl-3,5-dihydroxy-6-methylphthalide + S-adenosyl-L-methionine = 4-farnesyl-3,5-dihydroxy-6-methoxylphthalide + S-adenosyl-L-homocysteine + H(+). It catalyses the reaction 6-O-desmethylmycophenolate + S-adenosyl-L-methionine = mycophenolate + S-adenosyl-L-homocysteine + H(+). The protein operates within secondary metabolite biosynthesis; terpenoid biosynthesis. Its function is as follows. O-methyltransferase; part of the gene cluster that mediates the biosynthesis of mycophenolic acid (MPA), the first isolated antibiotic natural product in the world obtained from a culture of Penicillium brevicompactum in 1893. MpaG methylates farnesyl-DHMP-3C (FDHMP-3C) to yield MFDHMP-3C. The first step of the pathway is the synthesis of 5-methylorsellinic acid (5MOA) by the cytosolic polyketide synthase mpaC. 5MOA is then converted to the phthalide compound 5,7-dihydroxy-4,6-dimethylphthalide (DHMP) by the endoplasmic reticulum-bound cytochrome P450 monooxygenase mpaDE. MpaDE first catalyzes hydroxylation of 5-MOA to 4,6-dihydroxy-2-(hydroxymethyl)-3-methylbenzoic acid (DHMB). MpaDE then acts as a lactone synthase that catalyzes the ring closure to convert DHMB into DHMP. The next step is the prenylation of DHMP by the Golgi apparatus-associated prenyltransferase mpaA to yield farnesyl-DHMP (FDHMP). The ER-bound oxygenase mpaB then mediates the oxidative cleavage the C19-C20 double bond in FDHMP to yield FDHMP-3C via a mycophenolic aldehyde intermediate. The O-methyltransferase mpaG catalyzes the methylation of FDHMP-3C to yield MFDHMP-3C. MpaG and mpaB can also switch the order in which they act and, in this case, the conversion of FDHMP to MFDHMP-3C can take place via 5-O-methyl-FDHMP (MFDHMP). After the cytosolic methylation of FDHMP-3C, MFDHMP-3C enters into peroxisomes probably via free diffusion due to its low molecular weight. Upon a peroxisomal CoA ligation reaction, catalyzed by a beta-oxidation component enzyme acyl-CoA ligase ACL891, MFDHMP-3C-CoA would then be restricted to peroxisomes for the following beta-oxidation pathway steps. The peroxisomal beta-oxidation machinery than converts MFDHMP-3C-CoA into MPA_CoA, via a beta-oxidation chain-shortening process. Finally mpaH acts as a peroxisomal acyl-CoA hydrolase with high substrate specificity toward MPA-CoA to release the final product MPA. MpaH can also hydrolyze DMMPA-CoA to release demethylmycophenolic acid (DMMPA) that is further converted to MPA by mpaG. This chain is O-methyltransferase mpaG, found in Penicillium brevicompactum.